Here is a 1352-residue protein sequence, read N- to C-terminus: MDAATPDCTSKCRSLKHALDVLSVVTKGSESQIKSFLARYCYNAATVKDAFGRNAGHLASSCGKKGVLDWLIEKGVDLLVKDKESGWTALHRSVFYGHIDCVWSLLKHGVSLYMQDKEGLSPLDLLMKDRPTHVVFKDTDPTEVYTWGDNTNFTLGHGSQNSKHHPELLDLFSRSGVYVKQVVLCKFHSVFLSQKGQVYTCGHGRGGRLGHGDEQTCLVPRLVEGLSGHNCSQVAAAKDHTVVLTDDGCVYTFGLNMFHQLGIIPPPASCNVPRQIQAKYLKGRTIIGVAAGRFHTVLWTREAVYTLGLNGGQLGHLLDPNGEKCVTTPRQVSALHHKDIAVSLVAASDGATVCVTTRGDIYLLADYQCKKMATKQLNLKKVLVSGGCMEYKVDPEHLTENGGQKICVLAMDGAGRVFCWRSISSSLKQCRWAYPRQVSISDIALNRNEILFVTQDGEGFKGKWFEDKRKNSEKKADILPNLHHSSSDVSCVPDTNSVYERIRLEKLPFAHRAVSVSTDPSGCNFAILQSDPKTSLYEIPVVSSSSFFEEFGKLLRETDEMDSFHDVTFQVGNRHFPAHKYILAVRSDFFQKLFLSDGSSLELTDVYQKDEDAAGCHLFVVEKVHPDLFEYLLQFMYTDTCDLLTHGFKPRMIVKRKAEDCEGSPDSHLHTVNCHVDDKQKSAFEVYRSNQAHTLSERQKSKPKSSKKGKGVGDDDPVRMLQSVAKKFGLSNLSSRLEGVRLENEKINVIAKKTGNKLKLSQKKCSFLYDVTMKSVDGKEFSCHKCVLCARLEYFHSMLSRSWIEASSCAALEMPIQSEILKVILDYLYTDEAVVIKESQNVDFVCSVLVVADQLLITRLKEICEVALTENLTLKNAAMLLEFAALYNAGQLKLSCLQFIGLNMAALLEARSLDVLSEDVLKDLSIFYRKMIPAMERRVITPYQDGPDISSMQVEDGEVFFKEEINMEPNYSETMFKKAKTRAKKKPRKRSDSSGGYTLSDVIQSPPSAGLLKSAKTNSVESLPELLTSDSEGSYAGVASPRDLQSPDFTAGFHSDKVEGKAKPYVNGIPPPCTREDVKPWEKSPTTKSAPQFIPSNRVDTAASSSWLAGSCSPVSPPVVDLRTIMETEENRQKYGAAPKSNLGKIISHGIKLSQKQRKMIALTTKENNSGTNSMEAILTAPSKSPKPANAWAPLHSPLSRSFRDFLLEEKKPVPGYGSGDHVKKVCFKGTENSPALNVARCSTHGTPGLESNHVSDFPLLDSPNPWQSSSLAASPAVAPVTFASIVEEERQQEAALIRSREKPLALIQVEEHAIQDLLVFYEAFGNPEEFVVVERAPQGPLAVPMWNKHGC.

ANK repeat units follow at residues 51 to 80 and 85 to 114; these read FGRN…DLLV and SGWT…SLYM. RCC1 repeat units follow at residues 141-194, 195-246, and 248-301; these read PTEV…FLSQ, KGQV…VLTD, and GCVY…LWTR. The BTB 1 domain maps to 565–645; it reads HDVTFQVGNR…MYTDTCDLLT (81 aa). Residues 692–716 form a disordered region; the sequence is AHTLSERQKSKPKSSKKGKGVGDDD. Residues 701–710 show a composition bias toward basic residues; sequence SKPKSSKKGK. A BTB 2 domain is found at 769 to 837; that stretch reads YDVTMKSVDG…LYTDEAVVIK (69 aa). The segment at 976–1002 is disordered; that stretch reads FKKAKTRAKKKPRKRSDSSGGYTLSDV. The segment covering 977–989 has biased composition (basic residues); sequence KKAKTRAKKKPRK. The residue at position 991 (S991) is a Phosphoserine. Residues 993–1002 show a composition bias toward polar residues; the sequence is SSGGYTLSDV. S1005, S1031, S1034, S1040, S1046, S1055, S1084, S1111, S1113, and S1116 each carry phosphoserine. The segment at 1032–1094 is disordered; sequence EGSYAGVASP…PTTKSAPQFI (63 aa). Residues 1084-1094 are compositionally biased toward polar residues; that stretch reads SPTTKSAPQFI.

As to quaternary structure, interacts with the PH domain of BTK.

The protein localises to the cytoplasm. Its subcellular location is the membrane. Acts as an inhibitor of BTK tyrosine kinase activity, thereby playing a role in B-cell development. Down-regulates BTK kinase activity, leading to interference with BTK-mediated calcium mobilization and NF-kappa-B-driven transcription. This Mus musculus (Mouse) protein is Inhibitor of Bruton tyrosine kinase (Ibtk).